An 88-amino-acid chain; its full sequence is Small ribosomal subunit protein uS15 (88 aa).

This sequence belongs to the universal ribosomal protein uS15 family. As to quaternary structure, part of the 30S ribosomal subunit. Forms a bridge to the 50S subunit in the 70S ribosome, contacting the 23S rRNA.

Functionally, one of the primary rRNA binding proteins, it binds directly to 16S rRNA where it helps nucleate assembly of the platform of the 30S subunit by binding and bridging several RNA helices of the 16S rRNA. Forms an intersubunit bridge (bridge B4) with the 23S rRNA of the 50S subunit in the ribosome. The sequence is that of Small ribosomal subunit protein uS15 from Flavobacterium psychrophilum (strain ATCC 49511 / DSM 21280 / CIP 103535 / JIP02/86).